The following is a 436-amino-acid chain: 3-hydroxy-3-methylglutaryl-coenzyme A reductase (436 aa).

Residues Glu-99, Lys-277, and Asp-293 each act as charge relay system in the active site. The Proton donor role is filled by His-390.

The protein belongs to the HMG-CoA reductase family.

The catalysed reaction is (R)-mevalonate + 2 NADP(+) + CoA = (3S)-3-hydroxy-3-methylglutaryl-CoA + 2 NADPH + 2 H(+). It participates in metabolic intermediate biosynthesis; (R)-mevalonate biosynthesis; (R)-mevalonate from acetyl-CoA: step 3/3. Functionally, converts HMG-CoA to mevalonate. This Archaeoglobus fulgidus (strain ATCC 49558 / DSM 4304 / JCM 9628 / NBRC 100126 / VC-16) protein is 3-hydroxy-3-methylglutaryl-coenzyme A reductase (hmgA).